Here is a 305-residue protein sequence, read N- to C-terminus: Sulfate adenylyltransferase subunit 2 (305 aa).

The protein belongs to the PAPS reductase family. CysD subfamily. In terms of assembly, heterodimer composed of CysD, the smaller subunit, and CysN.

The enzyme catalyses sulfate + ATP + H(+) = adenosine 5'-phosphosulfate + diphosphate. It functions in the pathway sulfur metabolism; hydrogen sulfide biosynthesis; sulfite from sulfate: step 1/3. With CysN forms the ATP sulfurylase (ATPS) that catalyzes the adenylation of sulfate producing adenosine 5'-phosphosulfate (APS) and diphosphate, the first enzymatic step in sulfur assimilation pathway. APS synthesis involves the formation of a high-energy phosphoric-sulfuric acid anhydride bond driven by GTP hydrolysis by CysN coupled to ATP hydrolysis by CysD. This Pseudomonas fluorescens (strain Pf0-1) protein is Sulfate adenylyltransferase subunit 2.